The primary structure comprises 159 residues: Probable epoxidase scpX (159 aa).

The N-terminal stretch at 1-25 is a signal peptide; the sequence is MATLIRLLRLLPVASSSAVLMFALD. 2 helical membrane passes run 59 to 79 and 96 to 116; these read WVLI…LFIS and LLFS…IAAI. N-linked (GlcNAc...) asparagine glycosylation is found at asparagine 124 and asparagine 136. Residues 139-159 traverse the membrane as a helical segment; sequence RALLTDLPAWLCFIAAALKAL.

It belongs to the epoxidase xenD family.

It is found in the membrane. It participates in mycotoxin biosynthesis. Its function is as follows. Probable epoxidase; part of the gene scp cluster that mediates the biosynthesis of a hirsutellone-like compound that has still to be identified. The protein is Probable epoxidase scpX of Mollisia scopiformis (Conifer needle endophyte fungus).